A 63-amino-acid chain; its full sequence is Movement protein TGBp3 (63 aa).

The chain crosses the membrane as a helical span at residues 1–21 (MIVYVLVGLSAFCIVLYLISQ). Topologically, residues 22–63 (GQSDCVVLITGESVRVQGCRIDGEFGSVLSKLKPFGCGSFRS) are cytoplasmic.

It belongs to the Tymovirales TGBp3 protein family.

It is found in the host endoplasmic reticulum membrane. Plays a role in viral cell-to-cell propagation, by facilitating genome transport to neighboring plant cells through plasmosdesmata. May induce the formation of granular vesicles derived from the Endoplasmic reticulum, which align on actin filaments. The protein is Movement protein TGBp3 of Solanum tuberosum (Potato).